The chain runs to 203 residues: Ribonuclease HII (203 aa).

Positions Gly18–Ala203 constitute an RNase H type-2 domain. A divalent metal cation contacts are provided by Asp24, Glu25, and Asp116.

Belongs to the RNase HII family. Mn(2+) serves as cofactor. The cofactor is Mg(2+).

It localises to the cytoplasm. It carries out the reaction Endonucleolytic cleavage to 5'-phosphomonoester.. Functionally, endonuclease that specifically degrades the RNA of RNA-DNA hybrids. In Shewanella pealeana (strain ATCC 700345 / ANG-SQ1), this protein is Ribonuclease HII.